A 220-amino-acid polypeptide reads, in one-letter code: MTEQKALVKRITNETKIQIAISLKGGPLAIEHSIFPEKEAEAVAEQATQSQVINVHTGIGFLDHMIHALAKHSGWSLIVECIGDLHIDDHHTTEDCGIALGQAFKEALGAVRGVKRFGSGFAPLDEALSRAVVDLSNRPYAVVELGLQREKVGDLSCEMIPHFLESFAEASRITLHVDCLRGKNDHHRSESAFKALAVAIREATSPNGTNDVPSTKGVLM.

Residues Glu14, 64 to 72 (HMIHALAKH), 90 to 94 (HHTTE), Arg116, and Arg138 each bind substrate. Mn(2+) contacts are provided by His64, His90, His91, and Glu94. Residues His162, His186, His187, and Glu190 each coordinate Mn(2+). Substrate contacts are provided by residues 186–194 (HHRSESAFK) and 214–216 (STK).

This sequence belongs to the imidazoleglycerol-phosphate dehydratase family. It depends on Mn(2+) as a cofactor.

It carries out the reaction D-erythro-1-(imidazol-4-yl)glycerol 3-phosphate = 3-(imidazol-4-yl)-2-oxopropyl phosphate + H2O. It functions in the pathway amino-acid biosynthesis; L-histidine biosynthesis; L-histidine from 5-phospho-alpha-D-ribose 1-diphosphate: step 6/9. The chain is Imidazoleglycerol-phosphate dehydratase from Saccharomyces cerevisiae (strain ATCC 204508 / S288c) (Baker's yeast).